A 401-amino-acid chain; its full sequence is Adaptive-response sensory kinase SasA (401 aa).

The region spanning 175 to 400 (MLVHDLRNPL…WFHFTLPVYP (226 aa)) is the Histidine kinase domain. His-178 bears the Phosphohistidine; by autocatalysis mark.

Homooligomerizes. Interacts with KaiC. Participates in the KaiABC clock complex, whose core is composed of a KaiC homohexamer, 6 KaiB and up to 6 KaiA dimers. SasA and KaiB(fs) compete to bind to KaiC.

It carries out the reaction ATP + protein L-histidine = ADP + protein N-phospho-L-histidine.. Member of the two-component regulatory system SasA/RpaA involved in genome-wide circadian gene expression. One of several clock output pathways. Participates in the Kai clock protein complex, the main circadian regulator in cyanobacteria, via its interaction with KaiC. KaiC enhances the autophosphorylation activity of SasA, which then transfers its phosphate group to RpaA to activate it. In addition to its output function, recruits fold-shifted KaiB (KaiB(fs)) to KaiC to cooperatively form the KaiB(6):KaiC(6) complex (independent of SasA kinase activity). Required for robustness of the circadian rhythm of gene expression and is involved in clock output, also required for adaptation to light/dark cycles. The protein is Adaptive-response sensory kinase SasA of Trichormus variabilis (strain ATCC 29413 / PCC 7937) (Anabaena variabilis).